We begin with the raw amino-acid sequence, 202 residues long: Pectinesterase inhibitor 11 (202 aa).

The N-terminal stretch at 1 to 21 (MAKQIFYTLFLFLLSTAILTA) is a signal peptide. Cys-43 and Cys-52 are disulfide-bonded. Residue Asn-76 is glycosylated (N-linked (GlcNAc...) asparagine). A disulfide bridge links Cys-109 with Cys-160.

This sequence belongs to the PMEI family.

The protein resides in the secreted. The protein localises to the extracellular space. It localises to the apoplast. Pectin methylesterase (PME) inhibitor involved in the maintenance of cell wall integrity in response to necrotrophic pathogens. Modulates PME activity and pectin methylesterification during infection by Botrytis cinerea and contributes to resistance against the pathogen. This Arabidopsis thaliana (Mouse-ear cress) protein is Pectinesterase inhibitor 11.